A 199-amino-acid chain; its full sequence is MIAFLKGAVFERRPDSIIIDVNGVGYEVNIHSRLFPRLPQRGEPILIHTFLQVLENEFKLFGFLDQDELRLFKTLLTVSGIGSKGALAVLSTMEPLVFYRAIASQDEKTLVRIPGVGKKTAQRMIFELQDKVPELKLVEVEKEQRPLLDELMEALEILGYSRSEVLPAIMDLNRNKQLGNIVEENIKLVLKAKAQEMRR.

Residues 1–64 are domain I; sequence MIAFLKGAVF…ENEFKLFGFL (64 aa). Positions 65–143 are domain II; it reads DQDELRLFKT…ELKLVEVEKE (79 aa). Residues 144-148 form a flexible linker region; that stretch reads QRPLL. Residues 148–199 form a domain III region; sequence LDELMEALEILGYSRSEVLPAIMDLNRNKQLGNIVEENIKLVLKAKAQEMRR.

It belongs to the RuvA family. Homotetramer. Forms an RuvA(8)-RuvB(12)-Holliday junction (HJ) complex. HJ DNA is sandwiched between 2 RuvA tetramers; dsDNA enters through RuvA and exits via RuvB. An RuvB hexamer assembles on each DNA strand where it exits the tetramer. Each RuvB hexamer is contacted by two RuvA subunits (via domain III) on 2 adjacent RuvB subunits; this complex drives branch migration. In the full resolvosome a probable DNA-RuvA(4)-RuvB(12)-RuvC(2) complex forms which resolves the HJ.

The protein localises to the cytoplasm. The RuvA-RuvB-RuvC complex processes Holliday junction (HJ) DNA during genetic recombination and DNA repair, while the RuvA-RuvB complex plays an important role in the rescue of blocked DNA replication forks via replication fork reversal (RFR). RuvA specifically binds to HJ cruciform DNA, conferring on it an open structure. The RuvB hexamer acts as an ATP-dependent pump, pulling dsDNA into and through the RuvAB complex. HJ branch migration allows RuvC to scan DNA until it finds its consensus sequence, where it cleaves and resolves the cruciform DNA. This is Holliday junction branch migration complex subunit RuvA from Syntrophomonas wolfei subsp. wolfei (strain DSM 2245B / Goettingen).